Consider the following 168-residue polypeptide: G/U mismatch-specific DNA glycosylase (168 aa).

The protein belongs to the uracil-DNA glycosylase (UDG) superfamily. TDG/mug family. In terms of assembly, binds DNA as a monomer.

It localises to the cytoplasm. It carries out the reaction Specifically hydrolyzes mismatched double-stranded DNA and polynucleotides, releasing free uracil.. In terms of biological role, excises ethenocytosine and uracil, which can arise by alkylation or deamination of cytosine, respectively, from the corresponding mispairs with guanine in ds-DNA. It is capable of hydrolyzing the carbon-nitrogen bond between the sugar-phosphate backbone of the DNA and the mispaired base. The complementary strand guanine functions in substrate recognition. Required for DNA damage lesion repair in stationary-phase cells. This is G/U mismatch-specific DNA glycosylase from Klebsiella pneumoniae subsp. pneumoniae (strain ATCC 700721 / MGH 78578).